The primary structure comprises 491 residues: Protein nucleotidyltransferase YdiU (491 aa).

Residues Gly94, Gly96, Arg97, Lys117, Asp129, Gly130, Arg180, and Arg187 each coordinate ATP. Asp256 (proton acceptor) is an active-site residue. 2 residues coordinate Mg(2+): Asn257 and Asp266. Residue Asp266 participates in ATP binding.

It belongs to the SELO family. It depends on Mg(2+) as a cofactor. The cofactor is Mn(2+).

The enzyme catalyses L-seryl-[protein] + ATP = 3-O-(5'-adenylyl)-L-seryl-[protein] + diphosphate. It catalyses the reaction L-threonyl-[protein] + ATP = 3-O-(5'-adenylyl)-L-threonyl-[protein] + diphosphate. The catalysed reaction is L-tyrosyl-[protein] + ATP = O-(5'-adenylyl)-L-tyrosyl-[protein] + diphosphate. It carries out the reaction L-histidyl-[protein] + UTP = N(tele)-(5'-uridylyl)-L-histidyl-[protein] + diphosphate. The enzyme catalyses L-seryl-[protein] + UTP = O-(5'-uridylyl)-L-seryl-[protein] + diphosphate. It catalyses the reaction L-tyrosyl-[protein] + UTP = O-(5'-uridylyl)-L-tyrosyl-[protein] + diphosphate. Functionally, nucleotidyltransferase involved in the post-translational modification of proteins. It can catalyze the addition of adenosine monophosphate (AMP) or uridine monophosphate (UMP) to a protein, resulting in modifications known as AMPylation and UMPylation. The sequence is that of Protein nucleotidyltransferase YdiU from Clostridium botulinum (strain Alaska E43 / Type E3).